Here is an 814-residue protein sequence, read N- to C-terminus: Leucine--tRNA ligase (814 aa).

The 'HIGH' region motif lies at 42 to 52 (PYPSGNLHIGH). The 'KMSKS' region motif lies at 582 to 586 (KMSKS). Lys585 serves as a coordination point for ATP.

It belongs to the class-I aminoacyl-tRNA synthetase family.

It localises to the cytoplasm. The enzyme catalyses tRNA(Leu) + L-leucine + ATP = L-leucyl-tRNA(Leu) + AMP + diphosphate. The protein is Leucine--tRNA ligase of Herpetosiphon aurantiacus (strain ATCC 23779 / DSM 785 / 114-95).